Reading from the N-terminus, the 11103-residue chain is Colossin-A (11103 aa).

The first 35 residues, 1–35 (MGTIKTKFKNNYLKNSYLFIIYIILFNLVIGIANS), serve as a signal peptide directing secretion. 4 N-linked (GlcNAc...) asparagine glycosylation sites follow: asparagine 95, asparagine 120, asparagine 137, and asparagine 198. Residues 273–324 (NLFAVGNYVFFDVNRDGVHETTELFAPNVKVELYDAISSTRLIASTFTDLNG) form a Kelch 1 repeat. The 62-residue stretch at 298 to 359 (APNVKVELYD…SNGPDNVINA (62 aa)) folds into the CNA-B 1 domain. Asparagine 372, asparagine 386, and asparagine 422 each carry an N-linked (GlcNAc...) asparagine glycan. Positions 423-469 (LSGITVQLTTPSHVVLKTAQTDYAGNYVFDDLSEGVYSVHFILPENY) constitute a CNA-B 2 domain. Asparagine 493 carries an N-linked (GlcNAc...) asparagine glycan. CNA-B domains are found at residues 551–599 (LPGV…PDGY), 676–745 (VANV…INLT), 803–871 (APFV…FTLN), 931–999 (AEGV…IDLS), 1057–1095 (LPNI…EGDY), and 1170–1231 (LSNT…FNSS). Asparagine 678 carries N-linked (GlcNAc...) asparagine glycosylation. Asparagine 1059, asparagine 1229, and asparagine 1239 each carry an N-linked (GlcNAc...) asparagine glycan. Positions 1277 to 1314 (ISNIPLSLISQKTNQIISSVVTDSNGKYQFEDVPPGDY) constitute a CNA-B 9 domain. N-linked (GlcNAc...) asparagine glycosylation occurs at asparagine 1329. CNA-B domains are found at residues 1391–1458 (SDVS…FKLT), 1494–1530 (LPGV…PGDY), 1602–1651 (LPGV…YKQV), 1708–1779 (LSDI…VTVK), 1824–1891 (SDVS…FKLT), 1927–1963 (LPGV…PGDY), 2035–2086 (LPGV…QVAQ), and 2141–2177 (VEGI…PGDY). N-linked (GlcNAc...) asparagine glycosylation occurs at asparagine 1613. A disordered region spans residues 1716–1740 (TDKDGNEISNTKSGPDGKYQFEDVP). 2 N-linked (GlcNAc...) asparagine glycosylation sites follow: asparagine 1759 and asparagine 1772. Residue asparagine 2046 is glycosylated (N-linked (GlcNAc...) asparagine). N-linked (GlcNAc...) asparagine glycans are attached at residues asparagine 2192 and asparagine 2311. CNA-B domains are found at residues 2254–2321 (SDVS…FKLT), 2357–2402 (LPGV…TPIG), 2465–2514 (LPGV…YKQV), 2571–2640 (LSDI…NFVT), 2687–2754 (SDVS…FKLT), 2790–2835 (LPGV…TPIG), 2898–2947 (LPGV…YKQV), and 3004–3040 (LEGI…PGDY). An N-linked (GlcNAc...) asparagine glycan is attached at asparagine 2476. Residues 2580-2603 (DKDGNEITNTKSGPDGKYQFEDVP) form a disordered region. Asparagine 2622 carries an N-linked (GlcNAc...) asparagine glycan. N-linked (GlcNAc...) asparagine glycans are attached at residues asparagine 2801 and asparagine 2909. Asparagine 3048, asparagine 3055, and asparagine 3118 each carry an N-linked (GlcNAc...) asparagine glycan. 4 consecutive CNA-B domains span residues 3117–3184 (SNVS…FKLT), 3220–3256 (LPGV…PGDY), 3328–3364 (LPGV…PGSY), and 3434–3470 (VEGI…PGDY). A glycan (N-linked (GlcNAc...) asparagine) is linked at asparagine 3339. An N-linked (GlcNAc...) asparagine glycan is attached at asparagine 3485. The Kelch 2 repeat unit spans residues 3503–3549 (SCFAVSGPLDNQNLGLSLFYEIGTMVWIDSNNNGKFEQPSDVLKSDV). CNA-B domains follow at residues 3547 to 3614 (SDVS…FKLT), 3650 to 3686 (LPGV…PGDY), and 3758 to 3809 (LPGV…QVAQ). Residues asparagine 3769 and asparagine 3827 are each glycosylated (N-linked (GlcNAc...) asparagine). Residues 3864 to 3900 (LSDITIRLTDKDGKVIQSTTSGPDGKYQFEDVPPGDY) form the CNA-B 33 domain. N-linked (GlcNAc...) asparagine glycosylation occurs at asparagine 3915. CNA-B domains are found at residues 3980–4047 (SDVS…FKLT), 4083–4128 (LPGV…TPIG), 4191–4240 (LPGV…YKQV), 4297–4378 (LSDI…NFVT), 4425–4492 (SDVS…FKLT), 4528–4573 (LPGV…TPIG), 4636–4685 (LPGV…YKQV), and 4742–4778 (VEGI…PGDY). Asparagine 4202 carries an N-linked (GlcNAc...) asparagine glycan. A disordered region spans residues 4286-4341 (NTGKQTDDSPPLSDITIRLTDKDGNEITKTKSRPDGNENSNTKSGPDGKYQFEDVP). Basic and acidic residues predominate over residues 4304 to 4321 (LTDKDGNEITKTKSRPDG). Asparagine 4360 carries an N-linked (GlcNAc...) asparagine glycan. An N-linked (GlcNAc...) asparagine glycan is attached at asparagine 4647. N-linked (GlcNAc...) asparagine glycosylation is found at asparagine 4792 and asparagine 4918. 4 CNA-B domains span residues 4865-4928 (ITLT…FKLT), 4964-5009 (LPGV…TPIG), 5072-5123 (LPGV…QVAQ), and 5178-5214 (LEGI…PGDY). The N-linked (GlcNAc...) asparagine glycan is linked to asparagine 5083. N-linked (GlcNAc...) asparagine glycosylation is found at asparagine 5229, asparagine 5292, and asparagine 5348. The Kelch 3 repeat unit spans residues 5247 to 5293 (SCFAVSGPLDNQNLGLSPFYEIGTIVWIDSNNNDKFEQPSDIGKSNV). 4 CNA-B domains span residues 5291-5358 (SNVS…FKLT), 5394-5430 (LPGV…PGDY), 5502-5553 (LPGV…QVAQ), and 5608-5644 (LSDI…PGDY). Asparagine 5513 carries an N-linked (GlcNAc...) asparagine glycan. Asparagine 5659 is a glycosylation site (N-linked (GlcNAc...) asparagine). 4 CNA-B domains span residues 5724–5791 (SDVS…FKLT), 5827–5872 (LPGV…TPIG), 5935–5984 (LPGV…YKQV), and 6041–6077 (VEGI…PGDY). Asparagine 5946 carries N-linked (GlcNAc...) asparagine glycosylation. N-linked (GlcNAc...) asparagine glycosylation is found at asparagine 6092 and asparagine 6155. 4 consecutive CNA-B domains span residues 6154–6221 (SNVS…FKLT), 6257–6302 (LPGV…TPIG), 6365–6416 (LPGV…QDAQ), and 6471–6507 (LSDI…PGDY). Asparagine 6376 carries an N-linked (GlcNAc...) asparagine glycan. N-linked (GlcNAc...) asparagine glycans are attached at residues asparagine 6522 and asparagine 6535. 4 CNA-B domains span residues 6587–6654 (SDVS…FKLT), 6690–6726 (LEGV…PGDY), 6798–6849 (LPGV…QVNQ), and 6904–6940 (VEGI…PGDY). N-linked (GlcNAc...) asparagine glycosylation is found at asparagine 6701, asparagine 6809, and asparagine 6848. 4 N-linked (GlcNAc...) asparagine glycosylation sites follow: asparagine 6954, asparagine 7080, asparagine 7137, and asparagine 7245. 8 CNA-B domains span residues 7023 to 7090 (SDVS…FKLT), 7126 to 7171 (LAGV…TPIG), 7234 to 7285 (LPGV…QDAQ), 7340 to 7411 (LSDI…VTVK), 7456 to 7523 (SDVS…FKLT), 7559 to 7596 (LPGV…PGDY), 7668 to 7719 (LTGV…QVAQ), and 7774 to 7810 (VEGI…PGDY). Residues 7351–7372 (DGNEITNTKSGPDGKYQFEDVP) form a disordered region. Residues asparagine 7391 and asparagine 7404 are each glycosylated (N-linked (GlcNAc...) asparagine). Asparagine 7679 is a glycosylation site (N-linked (GlcNAc...) asparagine). Asparagine 7825 and asparagine 7837 each carry an N-linked (GlcNAc...) asparagine glycan. CNA-B domains are found at residues 7887 to 7954 (SDVS…FKLT), 7990 to 8035 (LPGV…TPIG), 8098 to 8149 (LPGV…QVAQ), 8204 to 8265 (IPNI…FSLS), 8313 to 8374 (VGKS…VVDQ), 8420 to 8456 (LPGV…QGDY), and 8528 to 8587 (LPGI…PFDS). 2 N-linked (GlcNAc...) asparagine glycosylation sites follow: asparagine 8109 and asparagine 8255. Residues asparagine 8441, asparagine 8539, asparagine 8629, asparagine 8636, asparagine 8655, asparagine 8693, asparagine 8753, asparagine 8811, asparagine 8896, asparagine 8930, asparagine 8976, asparagine 9023, asparagine 9073, asparagine 9087, asparagine 9123, asparagine 9137, asparagine 9146, asparagine 9149, asparagine 9186, asparagine 9297, asparagine 9305, asparagine 9349, asparagine 9409, asparagine 9419, asparagine 9533, asparagine 9543, asparagine 9556, asparagine 9601, asparagine 9709, asparagine 9718, asparagine 9786, asparagine 9839, asparagine 9850, asparagine 9867, asparagine 9891, asparagine 9941, asparagine 9957, asparagine 9989, asparagine 10042, asparagine 10096, asparagine 10111, asparagine 10174, asparagine 10267, asparagine 10315, asparagine 10348, asparagine 10360, asparagine 10379, asparagine 10394, asparagine 10431, asparagine 10477, asparagine 10552, asparagine 10581, asparagine 10715, asparagine 10786, asparagine 10802, asparagine 10943, and asparagine 11018 are each glycosylated (N-linked (GlcNAc...) asparagine). The stretch at 8592 to 8638 (CFDLLDKSITNANLGLIPLYNIGSDAWLDNLNNGVRRNDSLLVPNVT) is one Kelch 4 repeat. A CNA-B 77 domain is found at 8634-8680 (VPNVTMSLYDNNGNLIETTITNSSGKYQFNDIQPGSYCVRATVPSNY). A CNA-B 78 domain is found at 8751–8810 (LPNVTVQLYDKVSGNILAATRSDDKGGYVVPNLLPSADYCVQFEVPPGYIVVVDSDDSVT). In terms of domain architecture, CNA-B 79 spans 8965 to 9014 (LPGVSVSLFSPNGTSIANTITDENGKYAFKDQVPGSYCIKMIIPPHYQQV). Positions 9071–9107 (VPNITMTLLDSQGKQINSTITNANGFYQFVDVAPGNY) constitute a CNA-B 80 domain. One can recognise a CNA-B 81 domain in the interval 9185-9220 (ANVSLSLVNTGNSEIKTTTTNSQGKYSFGQLLAGNY). In terms of domain architecture, CNA-B 82 spans 9299 to 9332 (TITLTPNNTALPTQTTTTDVNGNYRFDNLVVGNY). CNA-B domains lie at 9407-9447 (LVNI…VVQF) and 9531-9569 (MANI…PGNY). Positions 9659-9728 (VEGITVRIYD…ATGYISIDLS (70 aa)) constitute a CNA-B 85 domain. The region spanning 10044-10103 (TLFNADGSTPNDIFGKPIQMAVTDVNGKYSIPNVPPGSYYMTVSIPPRYIISNFTTTGLV) is the CNA-B 86 domain. The CNA-B 87 domain occupies 10172–10236 (LPNVTVLLLN…ITPTKLVSTS (65 aa)). In terms of domain architecture, CNA-B 88 spans 10313–10370 (PGNFTVQLKSANQAVNGGLTTVPIGTVVATSPVAANGSFSIPNLQLGNYTLTLIPPSG).

Belongs to the serine-aspartate repeat-containing protein (SDr) family.

The protein resides in the secreted. This chain is Colossin-A (colA), found in Dictyostelium discoideum (Social amoeba).